A 391-amino-acid polypeptide reads, in one-letter code: Cytochrome b (391 aa).

The next 4 membrane-spanning stretches (helical) occupy residues 33 to 53 (FGSLLSLCLALQILTGLFLAM), 77 to 98 (WLIRSIHANGASFFFICIYLHI), 113 to 133 (WSAGVILLLLVMMTAFVGYVL), and 178 to 198 (FFAFHFLFPFGIIAMTLVHLL). Positions 83 and 97 each coordinate heme b. Heme b-binding residues include histidine 182 and histidine 196. Histidine 201 provides a ligand contact to a ubiquinone. 4 consecutive transmembrane segments (helical) span residues 226–246 (YKDLIGFAWFALFLITLVLFI), 288–308 (LGGVFALLASILILLIVPILH), 320–340 (LAQIFMGLLVVDVAILTWIGG), and 347–367 (FIIIGQIASFLYFFLFLVFFP).

Belongs to the cytochrome b family. In terms of assembly, the cytochrome bc1 complex contains 3 respiratory subunits (MT-CYB, CYC1 and UQCRFS1), 2 core proteins (UQCRC1 and UQCRC2) and probably 6 low-molecular weight proteins. Heme b is required as a cofactor.

The protein localises to the mitochondrion inner membrane. Component of the ubiquinol-cytochrome c reductase complex (complex III or cytochrome b-c1 complex) that is part of the mitochondrial respiratory chain. The b-c1 complex mediates electron transfer from ubiquinol to cytochrome c. Contributes to the generation of a proton gradient across the mitochondrial membrane that is then used for ATP synthesis. The sequence is that of Cytochrome b (mt-cyb) from Kryptolebias marmoratus (Mangrove killifish).